Here is a 553-residue protein sequence, read N- to C-terminus: MNPEDLSVLIKNTAAAVLTEHELDASVLPETVTVERPRNPEHGDYATNLALQVAKKAGAQPRELAQWLADALAGNDAIDEASIAGPGFLNIRLAAAAQGAIVAQVLNAGADFGSNTTYQGKKINLEFVSANPTGPIHLGGTRWAAVGDSLGRVLEASGAEVTREYYFNDHGGQIDRFARSLVAAAKGEPTPEDGYGGGYIKEIAQGVLEQNPGALDGSDAEVQEAFRSAGVEMMFAQIKESLHEFGVDFDVYFHENSLFESGAVEKSIQKLKDNGKLYEAEGAWWLKSTEYGDDKDRVVIKSDGNAAYIAGDIAYVADKFDRGHDLAIYMLGADHHGYIARLRASAQALGYDPDAVEVLIGQMVNLVRDGKAVKMSKRAGTVITLDDLVEAIGVDGARYSLVRSSVDSSLDIDLGLWASQSADNPVYYVQYGHARICSILRKAAELGFDTAALADAPLDLLTHDKEGDLIRTLGEFPEVVATAATLREPHRIARYAEELAAVFHRFYDQCQVLPKAGEETEPIHSARLALASATRQVMSNALTTVGVSAPEKM.

Positions 130–140 (ANPTGPIHLGG) match the 'HIGH' region motif.

It belongs to the class-I aminoacyl-tRNA synthetase family. In terms of assembly, monomer.

It localises to the cytoplasm. It carries out the reaction tRNA(Arg) + L-arginine + ATP = L-arginyl-tRNA(Arg) + AMP + diphosphate. The polypeptide is Arginine--tRNA ligase (Corynebacterium aurimucosum (strain ATCC 700975 / DSM 44827 / CIP 107346 / CN-1) (Corynebacterium nigricans)).